The sequence spans 1129 residues: Eukaryotic translation initiation factor 3 subunit A (1129 aa).

One can recognise a PCI domain in the interval 319 to 502 (LQRMAAHVLL…NSIYFGTDLT (184 aa)). Disordered stretches follow at residues 590–633 (NNAR…NEIQ) and 836–1129 (AAEA…VKRR). Basic and acidic residues-rich tracts occupy residues 836 to 903 (AAEA…RSER), 923 to 964 (DRND…KDTD), 971 to 985 (WRVR…RERG), 994 to 1044 (GRDD…DQPQ), and 1053 to 1076 (DSPR…RDIR). The span at 1080–1091 (PKEGGGGGGGGN) shows a compositional bias: gly residues. The span at 1098 to 1119 (PRDEKPPVKRDQPQDKENKAGD) shows a compositional bias: basic and acidic residues.

Belongs to the eIF-3 subunit A family. Component of the eukaryotic translation initiation factor 3 (eIF-3) complex. The eIF-3 complex interacts with pix.

It localises to the cytoplasm. In terms of biological role, RNA-binding component of the eukaryotic translation initiation factor 3 (eIF-3) complex, which is involved in protein synthesis of a specialized repertoire of mRNAs and, together with other initiation factors, stimulates binding of mRNA and methionyl-tRNAi to the 40S ribosome. The eIF-3 complex specifically targets and initiates translation of a subset of mRNAs involved in cell proliferation. The polypeptide is Eukaryotic translation initiation factor 3 subunit A (Drosophila mojavensis (Fruit fly)).